Reading from the N-terminus, the 602-residue chain is Proteasome-associated ATPase (602 aa).

Residues 13-89 (PDAAEVERLR…LREEVDRLGQ (77 aa)) are a coiled coil. An ATP-binding site is contributed by 289 to 294 (GCGKTL). Residues 601–602 (YL) are docks into pockets in the proteasome alpha-ring.

This sequence belongs to the AAA ATPase family. In terms of assembly, homohexamer. Assembles into a hexameric ring structure that caps the 20S proteasome core. Strongly interacts with the prokaryotic ubiquitin-like protein Pup through a hydrophobic interface; the interacting region of ARC lies in its N-terminal coiled-coil domain. There is one Pup binding site per ARC hexamer ring. Upon ATP-binding, the C-terminus of ARC interacts with the alpha-rings of the proteasome core, possibly by binding to the intersubunit pockets.

It functions in the pathway protein degradation; proteasomal Pup-dependent pathway. In terms of biological role, ATPase which is responsible for recognizing, binding, unfolding and translocation of pupylated proteins into the bacterial 20S proteasome core particle. May be essential for opening the gate of the 20S proteasome via an interaction with its C-terminus, thereby allowing substrate entry and access to the site of proteolysis. Thus, the C-termini of the proteasomal ATPase may function like a 'key in a lock' to induce gate opening and therefore regulate proteolysis. The polypeptide is Proteasome-associated ATPase (Mycobacteroides abscessus (strain ATCC 19977 / DSM 44196 / CCUG 20993 / CIP 104536 / JCM 13569 / NCTC 13031 / TMC 1543 / L948) (Mycobacterium abscessus)).